The sequence spans 310 residues: Vomeronasal type-1 receptor 3 (310 aa).

Residues 1-5 (MASKD) are Extracellular-facing. The chain crosses the membrane as a helical span at residues 6–26 (FAIGMILSQIMVGFLGNFFLL). Residues 27–50 (YHYSFLHFTRGMLQSTDLTLKHLT) are Cytoplasmic-facing. The chain crosses the membrane as a helical span at residues 51–71 (IANSLVILSKGIPQTMAAFGL). The Extracellular segment spans residues 72–91 (KDSLSDIGCKFVFYVHRVGR). A helical membrane pass occupies residues 92–112 (AVCTGNACLLSVFQVITISSS). Topologically, residues 113 to 129 (EFRWAELKLHAHKYIRS) are cytoplasmic. Residues 130 to 150 (FILVLCWILNTLVNITVPLHV) traverse the membrane as a helical segment. The Extracellular segment spans residues 151-186 (TGKWNSINSTKTNDYGYCSGGSRSRIPHSLHIVLLS). An N-linked (GlcNAc...) asparagine glycan is attached at Asn158. Residues 187-207 (SLDVLCLGLMTLASGSMVFIL) form a helical membrane-spanning segment. Residues 208 to 235 (HRLKQQVQHIHGTNLSPRSSPESRVTQS) lie on the Cytoplasmic side of the membrane. The chain crosses the membrane as a helical span at residues 236-258 (ILVLVSTLCYFTRSPPSLHMSLF). The Extracellular segment spans residues 259–263 (PNPSW). A helical membrane pass occupies residues 264-284 (WPLNASALITACFPTVSPFVL). The Cytoplasmic segment spans residues 285 to 310 (MSRHPRIPRLGSACCGRNPQFPKLVR).

Belongs to the G-protein coupled receptor 1 family.

It localises to the cell membrane. In terms of biological role, putative pheromone receptor. This is Vomeronasal type-1 receptor 3 (VN1R3) from Pan troglodytes (Chimpanzee).